Consider the following 746-residue polypeptide: Probable ubiquitin carboxyl-terminal hydrolase MINDY-4 (746 aa).

3 disordered regions span residues 123-179, 198-254, and 319-342; these read DDET…SEGE, MALG…IKGE, and GKGATEASPYASNEHRRRSGFSNM. Polar residues-rich tracts occupy residues 141–152 and 165–174; these read YRSQNDLQFNKS and TEAGVTSTGV. C448 acts as the Nucleophile in catalysis. H666 serves as the catalytic Proton acceptor.

The protein belongs to the MINDY deubiquitinase family. FAM188 subfamily.

The catalysed reaction is Thiol-dependent hydrolysis of ester, thioester, amide, peptide and isopeptide bonds formed by the C-terminal Gly of ubiquitin (a 76-residue protein attached to proteins as an intracellular targeting signal).. Its function is as follows. Probable hydrolase that can remove 'Lys-48'-linked conjugated ubiquitin from proteins. The sequence is that of Probable ubiquitin carboxyl-terminal hydrolase MINDY-4 (mindy4) from Xenopus tropicalis (Western clawed frog).